Consider the following 381-residue polypeptide: Galactose-1-phosphate uridylyltransferase (381 aa).

2 residues coordinate Zn(2+): C65 and C68. 90–91 (ND) lines the UDP-alpha-D-glucose pocket. H131 contacts Zn(2+). A UDP-alpha-D-glucose-binding site is contributed by N175. H186 provides a ligand contact to Zn(2+). The Tele-UMP-histidine intermediate role is filled by H188. Q190 contributes to the UDP-alpha-D-glucose binding site. Fe cation-binding residues include E204, H306, H323, and H325. Residues 338 to 341 (KFMV) and 343 to 344 (FE) contribute to the UDP-alpha-D-glucose site.

The protein belongs to the galactose-1-phosphate uridylyltransferase type 1 family. In terms of assembly, homodimer. Zn(2+) is required as a cofactor.

It catalyses the reaction alpha-D-galactose 1-phosphate + UDP-alpha-D-glucose = alpha-D-glucose 1-phosphate + UDP-alpha-D-galactose. It participates in carbohydrate metabolism; galactose metabolism. The sequence is that of Galactose-1-phosphate uridylyltransferase (GAL7) from Cryptococcus neoformans var. neoformans serotype D (strain B-3501A) (Filobasidiella neoformans).